A 558-amino-acid chain; its full sequence is Protein NRT1/ PTR FAMILY 2.3 (558 aa).

12 helical membrane passes run 33-53 (TLLG…VFLI), 69-89 (VANG…DSFF), 92-112 (IPVI…LTLI), 128-148 (VLCT…LALV), 176-196 (FFNW…TAIV), 203-223 (SWKL…IVFV), 329-349 (LWLS…LIVL), 371-391 (VIII…VFPM), 403-423 (LQKV…SAVV), 439-459 (VLWL…QFPA), 478-498 (SLTS…IDLI), and 517-537 (VYWL…VCSW).

The protein belongs to the major facilitator superfamily. Proton-dependent oligopeptide transporter (POT/PTR) (TC 2.A.17) family. In terms of tissue distribution, expressed in flowers, siliques and root epidermis or cortex. Detected in shoots.

It is found in the membrane. Transporter involved in a passive nitrate efflux. This Arabidopsis thaliana (Mouse-ear cress) protein is Protein NRT1/ PTR FAMILY 2.3 (NPF2.3).